A 227-amino-acid chain; its full sequence is Terpene cyclase ltmB (227 aa).

7 helical membrane passes run 20 to 40 (LAETFVTFMGLGWLINYVLMI), 51 to 71 (MALIPLCNNIAWELVYTIIYP), 76 to 96 (VELAAFIAGVTLNFLIMTSAA), 113 to 133 (AGLIIVAGILMCFTGHVALAM), 135 to 155 (IGPALAYSWGAVICQLALSIG), 173 to 195 (LWSSRFLGSCCAVGFAFLRWRYW), and 206 to 226 (LILWSLATFLVADLTYGVCLL).

Belongs to the paxB family.

The protein localises to the membrane. It participates in secondary metabolite biosynthesis. In terms of biological role, terpene cyclase; part of the gene cluster that mediates the biosynthesis of lolitrems, indole-diterpene mycotoxins that are potent tremorgens in mammals, and are synthesized by clavicipitaceous fungal endophytes in association with their grass hosts. The geranylgeranyl diphosphate (GGPP) synthase ltmG is proposed to catalyze the first step in lolitrem biosynthesis. LtmG catalyzes a series of iterative condensations of isopentenyl diphosphate (IPP) with dimethylallyl diphosphate (DMAPP), geranyl diphosphate (GPP), and farnesyl diphosphate (FPP), to form GGPP. GGPP then condenses with indole-3-glycerol phosphate to form 3-geranylgeranylindole, an acyclic intermediate, to be incorporated into paxilline. Either ltmG or ltmC could be responsible for this step, as both are putative prenyl transferases. The FAD-dependent monooxygenase ltmM then catalyzes the epoxidation of the two terminal alkenes of the geranylgeranyl moiety, which is subsequently cyclized by ltmB, to paspaline. The cytochrome P450 monooxygenases ltmQ and ltmP can sequentially oxidize paspaline to terpendole E and terpendole F. Alternatively, ltmP converts paspaline to an intermediate which is oxidized by ltmQ to terpendole F. LtmF, ltmK, ltmE and ltmJ appear to be unique to the epichloe endophytes. The prenyltransferase ltmF is involved in the 27-hydroxyl-O-prenylation. The cytochrome P450 monooxygenase ltmK is required for the oxidative acetal ring formation. The multi-functional prenyltransferase ltmE is required for C20- and C21-prenylations of the indole ring of paspalanes and acts together with the cytochrome P450 monooxygenase ltmJ to yield lolitremanes by multiple oxidations and ring closures. The stereoisomer pairs of lolitriol and lolitrem N or lolitrem B and lolitrem F may be attributed to variations in the way in which ring closure can occur under the action of ltmJ. While the major product of this pathway is lolitrem B, the prenyl transferases and cytochrome P450 monooxygenases identified in this pathway have a remarkable versatility in their regio- and stereo-specificities to generate a diverse range of metabolites that are products of a metabolic grid rather than a linear pathway. The sequence is that of Terpene cyclase ltmB from Epichloe festucae var. lolii (Neotyphodium lolii).